Consider the following 171-residue polypeptide: CDP-archaeol synthase (171 aa).

Transmembrane regions (helical) follow at residues 7 to 27 (MFWALWYILPAYFANASPVLL), 55 to 75 (FLGGVSVGTLVGVLQYYLTPA), 84 to 104 (VLLAFLLSFGALMGDLVGSFI), 115 to 135 (PAVGLDQLGFLISALAFAYPV), and 141 to 161 (GQMLFLLIFTPLVHWGANYFA).

This sequence belongs to the CDP-archaeol synthase family. Mg(2+) serves as cofactor.

The protein localises to the cell membrane. The catalysed reaction is 2,3-bis-O-(geranylgeranyl)-sn-glycerol 1-phosphate + CTP + H(+) = CDP-2,3-bis-O-(geranylgeranyl)-sn-glycerol + diphosphate. It participates in membrane lipid metabolism; glycerophospholipid metabolism. Its function is as follows. Catalyzes the formation of CDP-2,3-bis-(O-geranylgeranyl)-sn-glycerol (CDP-archaeol) from 2,3-bis-(O-geranylgeranyl)-sn-glycerol 1-phosphate (DGGGP) and CTP. This reaction is the third ether-bond-formation step in the biosynthesis of archaeal membrane lipids. The protein is CDP-archaeol synthase of Thermococcus gammatolerans (strain DSM 15229 / JCM 11827 / EJ3).